The chain runs to 94 residues: Neutrophil antibiotic peptide NP-1 (94 aa).

An N-terminal signal peptide occupies residues Met-1–Ala-19. The propeptide occupies Lys-20–Gly-62. Cystine bridges form between Cys-65–Cys-93, Cys-67–Cys-82, and Cys-72–Cys-92. The residue at position 84 (Tyr-84) is a Phosphotyrosine.

The protein belongs to the alpha-defensin family. Highest expression in bone marrow and to a much lesser extent in small intestine.

The protein resides in the secreted. Active in vitro against S.aureus, fungi, Gram-positive and Gram-negative bacteria and to a lesser extent against an enveloped virus. The polypeptide is Neutrophil antibiotic peptide NP-1 (Rattus norvegicus (Rat)).